The primary structure comprises 479 residues: Adenosylhomocysteinase (479 aa).

Substrate contacts are provided by Thr-65, Asp-144, and Glu-204. 205–207 (TTT) is an NAD(+) binding site. 2 residues coordinate substrate: Lys-234 and Asp-238. NAD(+)-binding positions include Asn-239, 268–273 (GYGDVG), Glu-291, Asn-326, 347–349 (IGH), and Asn-392.

It belongs to the adenosylhomocysteinase family. The cofactor is NAD(+).

It localises to the cytoplasm. It carries out the reaction S-adenosyl-L-homocysteine + H2O = L-homocysteine + adenosine. It functions in the pathway amino-acid biosynthesis; L-homocysteine biosynthesis; L-homocysteine from S-adenosyl-L-homocysteine: step 1/1. May play a key role in the regulation of the intracellular concentration of adenosylhomocysteine. This Variovorax paradoxus (strain S110) protein is Adenosylhomocysteinase.